The primary structure comprises 220 residues: MDAAAAPEFTEEALEAGRLLFAGKAEFVMGVVSLSGLPPADRSEVCFAGRSNVGKSSLINALTGRAKLARSSAEPGRTRELNYFDIGDEGKLYLVDLPGFGYAKVSKTQTAAWTKLIKSYLRGRPSLRRVFLLVDARRGDLMDTDEEVMDLMDGAAVTYQVVLTKVDKVPKGEVEKIVVKIADKLKKRGAAHPVVRMTSAEKGFGIPELRAEIAALAMLG.

The EngB-type G domain maps to 41-219 (DRSEVCFAGR…RAEIAALAML (179 aa)). GTP is bound by residues 49–56 (GRSNVGKS), 76–80 (GRTRE), 96–99 (DLPG), 164–167 (TKVD), and 197–200 (MTSA). Mg(2+) contacts are provided by S56 and T78.

It belongs to the TRAFAC class TrmE-Era-EngA-EngB-Septin-like GTPase superfamily. EngB GTPase family. It depends on Mg(2+) as a cofactor.

In terms of biological role, necessary for normal cell division and for the maintenance of normal septation. This is Probable GTP-binding protein EngB from Hyphomonas neptunium (strain ATCC 15444).